The sequence spans 252 residues: dITP/XTP pyrophosphatase (252 aa).

Thr7–Lys12 provides a ligand contact to substrate. The Proton acceptor role is filled by Asp74. Asp74 lines the Mg(2+) pocket. Residues Ser75 and Phe193–Asp196 contribute to the substrate site. A disordered region spans residues Pro201–Glu224. Residues Lys230 and His235 to Arg236 each bind substrate.

It belongs to the HAM1 NTPase family. As to quaternary structure, homodimer. The cofactor is Mg(2+).

It carries out the reaction XTP + H2O = XMP + diphosphate + H(+). It catalyses the reaction dITP + H2O = dIMP + diphosphate + H(+). The catalysed reaction is ITP + H2O = IMP + diphosphate + H(+). Its function is as follows. Pyrophosphatase that catalyzes the hydrolysis of nucleoside triphosphates to their monophosphate derivatives, with a high preference for the non-canonical purine nucleotides XTP (xanthosine triphosphate), dITP (deoxyinosine triphosphate) and ITP. Seems to function as a house-cleaning enzyme that removes non-canonical purine nucleotides from the nucleotide pool, thus preventing their incorporation into DNA/RNA and avoiding chromosomal lesions. In Bifidobacterium longum subsp. infantis (strain ATCC 15697 / DSM 20088 / JCM 1222 / NCTC 11817 / S12), this protein is dITP/XTP pyrophosphatase.